A 341-amino-acid polypeptide reads, in one-letter code: Ribosomal RNA small subunit methyltransferase H (341 aa).

S-adenosyl-L-methionine contacts are provided by residues 47–49 (GGY), Asp-64, Phe-91, Asp-109, and Gln-116. Residues 292 to 319 (VAASEEEASRNPRARSAKLRAGVRTEAP) are disordered.

The protein belongs to the methyltransferase superfamily. RsmH family.

It localises to the cytoplasm. It carries out the reaction cytidine(1402) in 16S rRNA + S-adenosyl-L-methionine = N(4)-methylcytidine(1402) in 16S rRNA + S-adenosyl-L-homocysteine + H(+). Its function is as follows. Specifically methylates the N4 position of cytidine in position 1402 (C1402) of 16S rRNA. The polypeptide is Ribosomal RNA small subunit methyltransferase H (Rhizobium meliloti (strain 1021) (Ensifer meliloti)).